The primary structure comprises 230 residues: Transcription factor bHLH147 (230 aa).

Residues 1–17 (MESISPVSNQLLQPTTT) show a composition bias toward polar residues. Positions 1-52 (MESISPVSNQLLQPTTTSSNSDRSRRKRKKKSSPSSVEKSPSPSISLEKWRS) are disordered. Residues 33-46 (SPSSVEKSPSPSIS) show a composition bias toward low complexity. A bHLH domain is found at 147–196 (KQRATVLRLKAKGLPAVQRKVKVLSRLVPGCRKQSLPVVLEETTDYIAAM). The tract at residues 210–230 (VSSSPPPPTPGHEGGQTHMLG) is disordered.

As to quaternary structure, homodimer. Interacts with PRE3.

It is found in the nucleus. Functionally, atypical bHLH transcription factor probably unable to bind DNA. Negatively regulates brassinosteroid signaling. This is Transcription factor bHLH147 (BHLH147) from Arabidopsis thaliana (Mouse-ear cress).